The sequence spans 215 residues: Ribonuclease T (215 aa).

In terms of domain architecture, Exonuclease spans 20-194; sequence VVIDVETAGF…YDTERTAVLF (175 aa). The Mg(2+) site is built by D23, E25, H181, and D186. H181 functions as the Proton donor/acceptor in the catalytic mechanism.

It belongs to the RNase T family. Homodimer. The cofactor is Mg(2+).

Its function is as follows. Trims short 3' overhangs of a variety of RNA species, leaving a one or two nucleotide 3' overhang. Responsible for the end-turnover of tRNA: specifically removes the terminal AMP residue from uncharged tRNA (tRNA-C-C-A). Also appears to be involved in tRNA biosynthesis. The protein is Ribonuclease T of Citrobacter koseri (strain ATCC BAA-895 / CDC 4225-83 / SGSC4696).